The chain runs to 323 residues: Mitochondrial glutamate carrier 1 (323 aa).

3 Solcar repeats span residues 6-93 (ISLP…FRHQ), 101-214 (LTLL…LNQL), and 223-312 (SPFY…GIAE). A run of 6 helical transmembrane segments spans residues 12 to 32 (LING…IDLA), 62 to 82 (YFGM…EKAI), 107 to 127 (MLAG…MEML), 189 to 209 (GLGA…PLFA), 223 to 243 (SPFY…AVAV), and 292 to 312 (ALVI…GIAE).

Belongs to the mitochondrial carrier (TC 2.A.29) family. In terms of tissue distribution, expressed at high levels in brain, liver, and pancreas.

It localises to the mitochondrion inner membrane. The catalysed reaction is L-glutamate(in) + H(+)(in) = L-glutamate(out) + H(+)(out). Mitochondrial glutamate/H(+) symporter. Responsible for the transport of glutamate from the cytosol into the mitochondrial matrix with the concomitant import of a proton. Plays a role in the control of glucose-stimulated insulin secretion. The chain is Mitochondrial glutamate carrier 1 from Homo sapiens (Human).